The following is a 403-amino-acid chain: Argininosuccinate synthase (403 aa).

10-18 (AYSGGLDTS) provides a ligand contact to ATP. Residue Tyr87 participates in L-citrulline binding. Residue Gly117 coordinates ATP. Residues Thr119, Asn123, and Asp124 each contribute to the L-aspartate site. Asn123 provides a ligand contact to L-citrulline. Positions 127, 175, 184, 260, and 272 each coordinate L-citrulline.

This sequence belongs to the argininosuccinate synthase family. Type 1 subfamily. As to quaternary structure, homotetramer.

The protein localises to the cytoplasm. The catalysed reaction is L-citrulline + L-aspartate + ATP = 2-(N(omega)-L-arginino)succinate + AMP + diphosphate + H(+). Its pathway is amino-acid biosynthesis; L-arginine biosynthesis; L-arginine from L-ornithine and carbamoyl phosphate: step 2/3. This is Argininosuccinate synthase from Bacillus pumilus (strain SAFR-032).